The sequence spans 477 residues: MPFCLLDVDKDIPEREQHIYIKDSKEPKGHCKQRCNTNTIPGSMTERGCAFAGVKGVITGAIKDVLHVVHSPVGCTAYGNGTTKRYPTRPEMPDGSVFPVENFNLKHIVGTDLTESDVVFGGMNKLKKVIREASKEFPFVNAIYVYATCTTGLIGDDLDAVCKEMQAELGKDVVAFNAPGFAGPTQSKGHHVGNYTIFENLVGTKEPPKTTDYDINLIGEYNIDGDYWVLEKYFEDMGINVLSKFTGDATHGELCWMHKAKLSLVRCQRSATYVAKLIEEKYGVPYLKVDFFGPEYCAENLRAVGKYFGKEIEAEAVIQKEMEKIQPELDFYQSKLQGKKIWISAGGPKSWHLSKPIEQYLGMDVVALSGLFEHEDGYEKMQERAKDGTIIIDDPNTLEMEEVVEKYQPEIVLGGIKEKYFFHKLGVPSVMIHSYENGPYIGFGGFVNMARDIFTAIYNPAWKLMGFGEGEPGDSNE.

Positions 49, 75, and 149 each coordinate [8Fe-7S] cluster. Positions 267 and 433 each coordinate [7Fe-Mo-9S-C-homocitryl] cluster.

Belongs to the NifD/NifK/NifE/NifN family. Tetramer of two alpha and two beta chains. Forms complex with the iron protein (nitrogenase component 2). It depends on [8Fe-7S] cluster as a cofactor. The cofactor is [7Fe-Mo-9S-C-homocitryl] cluster.

It carries out the reaction N2 + 8 reduced [2Fe-2S]-[ferredoxin] + 16 ATP + 16 H2O = H2 + 8 oxidized [2Fe-2S]-[ferredoxin] + 2 NH4(+) + 16 ADP + 16 phosphate + 6 H(+). Functionally, this molybdenum-iron protein is part of the nitrogenase complex that catalyzes the key enzymatic reactions in nitrogen fixation. The protein is Nitrogenase molybdenum-iron protein alpha chain (nifD) of Methanococcus maripaludis (Methanococcus deltae).